The chain runs to 387 residues: MPNEFTSAKLRSDCSRTSLQWYTQTQHKMRRPSLLLKDILKCMLVVFGVWLLYILKLNYTAEECDMKKLNYVDPARIKRAHRNTQEVFQKECRPGHAKKTMDLLFKGKYSMDLEPFVQKIPTASEAELKYDPPFGFRKFSSKVQSLLDMLPEHDFPEHLRAKHCKRCVVIGNGGILHGLELGHALNQFDVVIRLNSAPIEGYSEHVGNKTTIRMTYPEGAPLSDAEYYANDLFVAVLFKSVDFKWLQAMVKNESLPFWIRLFFWKQVAEKIPLQPKHFRILNPVIIKETAFDILQYSEPQSRFWGHDKNIPTIGIIAIVLATHLCDEVSLAGFGYDLSQPRTPLHYFDSQCMGAMNWQVMHNVTTETQFLQKLIKEGVVQDLSGGIH.

At 1–33 (MPNEFTSAKLRSDCSRTSLQWYTQTQHKMRRPS) the chain is on the cytoplasmic side. Residues 34-54 (LLLKDILKCMLVVFGVWLLYI) traverse the membrane as a helical; Signal-anchor for type II membrane protein segment. At 55 to 387 (LKLNYTAEEC…VVQDLSGGIH (333 aa)) the chain is on the extracellular side. N-linked (GlcNAc...) asparagine glycans are attached at residues asparagine 58 and asparagine 208. A disulfide bridge links cysteine 167 with cysteine 325.

Belongs to the glycosyltransferase 29 family.

It localises to the golgi apparatus membrane. The enzyme catalyses a beta-D-Gal-(1-&gt;4)-beta-D-Glc-(1&lt;-&gt;1)-Cer(d18:1(4E)) + CMP-N-acetyl-beta-neuraminate = a ganglioside GM3 (d18:1(4E)) + CMP + H(+). The catalysed reaction is ganglioside GA2 (d18:1(4E)/18:0) + CMP-N-acetyl-beta-neuraminate = ganglioside GM2 (d18:1(4E)/18:0) + CMP + H(+). It catalyses the reaction a beta-D-Gal-(1&lt;-&gt;1')-ceramide + CMP-N-acetyl-beta-neuraminate = N-acetyl-alpha-neuraminosyl-(2-&gt;3)-beta-D-galactosyl-(1&lt;-&gt;1')-ceramide + CMP + H(+). It carries out the reaction ganglioside GA1 (d18:1(4E)/18:0) + CMP-N-acetyl-beta-neuraminate = ganglioside GM1 (d18:1(4E)/18:0) + CMP + H(+). Transfers the sialyl group (N-acetyl-alpha-neuraminyl or NeuAc) from CMP-NeuAc to the non-reducing terminal galactose (Gal) of glycosphingolipids forming gangliosides (important molecules involved in the regulation of multiple cellular processes, including cell proliferation and differentiation, apoptosis, embryogenesis, development, and oncogenesis). Mainly involved in the biosynthesis of ganglioside GM3 but can also use different glycolipids as substrate acceptors such as D-galactosylceramide (GalCer), asialo-GM2 (GA2) and asialo-GM1 (GA1), although less preferentially than beta-D-Gal-(1-&gt;4)-beta-D-Glc-(1&lt;-&gt;1)-Cer (LacCer). This is Lactosylceramide alpha-2,3-sialyltransferase (St3gal5) from Rattus norvegicus (Rat).